Here is a 380-residue protein sequence, read N- to C-terminus: Protein neprosin (380 aa).

An N-terminal signal peptide occupies residues Met1–Ala24. Positions Arg25–Pro128 are cleaved as a propeptide — activation peptide. An intrachain disulfide couples Cys52 to Cys98. N-linked (GlcNAc...) asparagine glycans are attached at residues Asn68, Asn145, and Asn152. A Neprosin PEP catalytic domain is found at Ser129–Gln380. The active site involves Glu188. Cysteines 219 and 224 form a disulfide. N-linked (GlcNAc...) asparagine glycosylation is present at Asn253. Residue Glu297 is part of the active site. Cys358 and Cys379 form a disulfide bridge.

This sequence belongs to the peptidase G3 family.

The protein resides in the secreted. It catalyses the reaction Hydrolysis of Pro-|-Xaa &gt;&gt; Ala-|-Xaa in oligopeptides.. Weakly inhibited by the aspartic protease inhibitor pepstatin. Weakly inhibited by pepstatin A (IC(50) of 140 uM) and 1,2-epoxy-3-(p-nitrophenoxy)propane (EPNP) (IC(50) of 480 uM). Activity is not affected by the POP inhibitor Z-Pro-prolinal inhibitor or the denaturant urea. Glutamic endopeptidase that preferentially cleaves peptide bonds on the C-terminal side of proline residues. Also cleaves peptide bonds on the C-terminal side of alanine residues but with less efficiency. In contrast to most proline-cleaving enzymes, effectively degrades proteins of any size. Found in the viscoelastic fluid of the pitcher, and so likely functions in the digestion of their prey. The polypeptide is Protein neprosin (Nepenthes x ventrata (Red tropical pitcher plant)).